We begin with the raw amino-acid sequence, 795 residues long: Probable diacylglycerol kinase 3 (795 aa).

EF-hand domains lie at 170–205 and 215–250; these read TPEN…MMNV and ELEQ…NIPL. The Ca(2+) site is built by aspartate 183, aspartate 185, asparagine 187, glutamate 194, aspartate 228, aspartate 230, aspartate 232, and glutamate 239. 2 Phorbol-ester/DAG-type zinc fingers span residues 265–316 and 329–375; these read SHVW…ATNC and YHHW…AQEC. The region spanning 423 to 558 is the DAGKc domain; sequence NDCRPLLVLV…MDRWQIKIEI (136 aa).

It belongs to the eukaryotic diacylglycerol kinase family. As to quaternary structure, monomer.

The enzyme catalyses a 1,2-diacyl-sn-glycerol + ATP = a 1,2-diacyl-sn-glycero-3-phosphate + ADP + H(+). Functionally, involved in AFD-neuron mediated thermotaxis. Regulates behavior to environmental temperature. Thought to have a role in olfactory adaptation by affecting diacylglycerol levels. This chain is Probable diacylglycerol kinase 3 (dgk-3), found in Caenorhabditis elegans.